The sequence spans 167 residues: Telethonin (167 aa).

Residue serine 39 is modified to Phosphoserine. The segment at proline 142–glycine 167 is disordered. Residues serine 157–glycine 167 are compositionally biased toward polar residues.

As to quaternary structure, interacts with MYOZ1, MYOZ2 and MYOZ3. Interacts with CSRP3. Interacts directly with the N-terminal Ig-like domains of 2 titin (TTN) molecules. Interacts with ANKRD2; the interaction is direct.

The protein localises to the cytoplasm. It localises to the myofibril. The protein resides in the sarcomere. In terms of biological role, muscle assembly regulating factor. Mediates the antiparallel assembly of titin (TTN) molecules at the sarcomeric Z-disk. This Mus musculus (Mouse) protein is Telethonin (Tcap).